Reading from the N-terminus, the 41-residue chain is Large ribosomal subunit protein bL36 (41 aa).

Belongs to the bacterial ribosomal protein bL36 family.

The chain is Large ribosomal subunit protein bL36 from Ruegeria sp. (strain TM1040) (Silicibacter sp.).